The sequence spans 223 residues: All-trans retinoic acid-induced differentiation factor (223 aa).

Residues 1–25 (MASRESGGSRAAALLLVLGVERALA) form the signal peptide. Residues 26-193 (LPEICTLCPG…YKCMRQGSFS (168 aa)) are Extracellular-facing. The EGF-like domain occupies 146-187 (QRDLCNSTGSPEMCPENGSCASDGPGLLQCVCADGFHGYKCM). Intrachain disulfides connect Cys150-Cys165, Cys159-Cys175, and Cys177-Cys186. A helical transmembrane segment spans residues 194–214 (LLMFFGILGSTTLAISILLWG). Residues 215 to 223 (TQRRKAKAS) lie on the Cytoplasmic side of the membrane.

As to quaternary structure, interacts with NELL1; the interaction promotes osteoblastic differentiation and mineralization. Interacts with SLC37A3; the interaction is direct and both proteins are mutually dependent for their stability.

The protein localises to the nucleus envelope. Its subcellular location is the cell membrane. It is found in the lysosome membrane. Functionally, promotes osteoblast cell differentiation and terminal mineralization. Plays a role in inducing the cell cycle arrest via inhibiting CCND1 expression in all-trans-retinoic acid (ATRA) signal pathway. In osteoclasts, forms a transporter complex with ATRAID for nitrogen-containing-bisphophonates (N-BPs) required for releasing N-BP molecules that have trafficked to lysosomes through fluid-phase endocytosis into the cytosol. The protein is All-trans retinoic acid-induced differentiation factor (Atraid) of Mus musculus (Mouse).